We begin with the raw amino-acid sequence, 143 residues long: Mediator of RNA polymerase II transcription subunit 10 (143 aa).

The segment at 123 to 143 (GAHSNTEISTNPGQKRQGNVS) is disordered. A compositionally biased stretch (polar residues) spans 124–143 (AHSNTEISTNPGQKRQGNVS).

The protein belongs to the Mediator complex subunit 10 family. Component of the Mediator complex.

Its subcellular location is the nucleus. Its function is as follows. Component of the Mediator complex, a coactivator involved in the regulated transcription of nearly all RNA polymerase II-dependent genes. Mediator functions as a bridge to convey information from gene-specific regulatory proteins to the basal RNA polymerase II transcription machinery. Mediator is recruited to promoters by direct interactions with regulatory proteins and serves as a scaffold for the assembly of a functional preinitiation complex with RNA polymerase II and the general transcription factors. In Yarrowia lipolytica (strain CLIB 122 / E 150) (Yeast), this protein is Mediator of RNA polymerase II transcription subunit 10 (NUT2).